We begin with the raw amino-acid sequence, 227 residues long: Eukaryotic translation initiation factor 4E-1 (227 aa).

Positions 1–52 (MAEEHETRPPSAGRPPSSGRGRADDADEREEGEIADDDSGHAPPQANPAAPH) are disordered. The span at 9-20 (PPSAGRPPSSGR) shows a compositional bias: low complexity. Over residues 25–37 (DADEREEGEIADD) the composition is skewed to acidic residues. 2 EIF4G-binding regions span residues 52 to 55 (HPLE) and 62 to 98 (FDNP…NNIH). Residues 70 to 75 (KQATWG), Lys102, and 120 to 121 (WE) contribute to the mRNA site. A disulfide bond links Cys125 and Cys163. The segment at 146 to 155 (HTLLAMIGEQ) is EIF4G-binding. Residues 170–175 (RGKQER) and 215–219 (KKMDK) each bind mRNA.

It belongs to the eukaryotic initiation factor 4E family. In terms of assembly, EIF4F is a multi-subunit complex, the composition of which varies with external and internal environmental conditions. It is composed of at least EIF4A, EIF4E and EIF4G. EIF4E is also known to interact with other partners. In higher plants two isoforms of EIF4F have been identified, named isoform EIF4F and isoform EIF(iso)4F. Isoform EIF4F has subunits p220 and p26, whereas isoform EIF(iso)4F has subunits p82 and p28. According to the redox status, the Cys-125-Cys-163 disulfide bridge may have a role in regulating protein function by affecting its ability to bind capped mRNA.

It localises to the nucleus. It is found in the cytoplasm. Functionally, component of the protein complex eIF4F, which is involved in the recognition of the mRNA cap, ATP-dependent unwinding of 5'-terminal secondary structure and recruitment of mRNA to the ribosome. Recognizes and binds the 7-methylguanosine-containing mRNA cap during an early step in the initiation of protein synthesis and facilitates ribosome binding by inducing the unwinding of the mRNAs secondary structures. This Oryza sativa subsp. japonica (Rice) protein is Eukaryotic translation initiation factor 4E-1.